We begin with the raw amino-acid sequence, 447 residues long: ATP-dependent protease ATPase subunit HslU (447 aa).

ATP contacts are provided by residues isoleucine 18, 60 to 65 (GVGKTE), aspartate 260, glutamate 325, and arginine 397.

This sequence belongs to the ClpX chaperone family. HslU subfamily. As to quaternary structure, a double ring-shaped homohexamer of HslV is capped on each side by a ring-shaped HslU homohexamer. The assembly of the HslU/HslV complex is dependent on binding of ATP.

It is found in the cytoplasm. In terms of biological role, ATPase subunit of a proteasome-like degradation complex; this subunit has chaperone activity. The binding of ATP and its subsequent hydrolysis by HslU are essential for unfolding of protein substrates subsequently hydrolyzed by HslV. HslU recognizes the N-terminal part of its protein substrates and unfolds these before they are guided to HslV for hydrolysis. The chain is ATP-dependent protease ATPase subunit HslU from Paraburkholderia phymatum (strain DSM 17167 / CIP 108236 / LMG 21445 / STM815) (Burkholderia phymatum).